The chain runs to 143 residues: Dehydrin DHN2 (143 aa).

The segment covering 1–10 (MEYQGQTGHA) has biased composition (polar residues). A disordered region spans residues 1–143 (MEYQGQTGHA…IKEKLPGGQH (143 aa)). The segment covering 24–34 (GHGGATGGPTG) has biased composition (gly residues). Low complexity predominate over residues 35 to 46 (THGAAAAAAGTG). The span at 51-61 (TRDDHKTDGVL) shows a compositional bias: basic and acidic residues. Residues 62 to 71 (RRSGSSSSSS) are compositionally biased toward low complexity. Positions 86–101 (KEKIKEKLPGGAHKDA) are enriched in basic and acidic residues. Over residues 109-123 (AAGEYAGTGTHGAEA) the composition is skewed to low complexity. Over residues 124-143 (TGEKKGVMDKIKEKLPGGQH) the composition is skewed to basic and acidic residues.

The protein belongs to the plant dehydrin family.

The chain is Dehydrin DHN2 (DHN2) from Hordeum vulgare (Barley).